The primary structure comprises 259 residues: Phosphatidylglycerol--prolipoprotein diacylglyceryl transferase (259 aa).

4 consecutive transmembrane segments (helical) span residues 16–36 (FAISWYSLSYVIGILLGWFYA), 55–75 (FITYAVIGIIVGGRLGFVLLY), 92–112 (QGGMSFHGGALGVIIAAYLFC), and 117–137 (VNFLSLTDIIATVVPIGLFLG). Arg138 lines the a 1,2-diacyl-sn-glycero-3-phospho-(1'-sn-glycerol) pocket. The next 3 membrane-spanning stretches (helical) occupy residues 172-192 (QLYEAFFEGLVLFCILAYATF), 201-221 (ALNLGLFLTFYALFRITIEIF), and 228-248 (IGFILDSLTMGQILSIPMLIL).

The protein belongs to the Lgt family.

Its subcellular location is the cell inner membrane. The enzyme catalyses L-cysteinyl-[prolipoprotein] + a 1,2-diacyl-sn-glycero-3-phospho-(1'-sn-glycerol) = an S-1,2-diacyl-sn-glyceryl-L-cysteinyl-[prolipoprotein] + sn-glycerol 1-phosphate + H(+). It functions in the pathway protein modification; lipoprotein biosynthesis (diacylglyceryl transfer). Catalyzes the transfer of the diacylglyceryl group from phosphatidylglycerol to the sulfhydryl group of the N-terminal cysteine of a prolipoprotein, the first step in the formation of mature lipoproteins. The polypeptide is Phosphatidylglycerol--prolipoprotein diacylglyceryl transferase (Rickettsia canadensis (strain McKiel)).